A 388-amino-acid polypeptide reads, in one-letter code: L-lactate dehydrogenase (388 aa).

The FMN hydroxy acid dehydrogenase domain occupies 1–380 (MIISAASDYR…SADALSRVTR (380 aa)). Tyrosine 24 provides a ligand contact to substrate. The FMN site is built by serine 106 and glutamine 127. Tyrosine 129 is a substrate binding site. Threonine 155 is an FMN binding site. Arginine 164 is a binding site for substrate. Lysine 251 contributes to the FMN binding site. The Proton acceptor role is filled by histidine 275. Arginine 278 contributes to the substrate binding site. FMN is bound at residue 306–330 (DSGIRSGLDVVRMLALGADAVLLGR).

The protein belongs to the FMN-dependent alpha-hydroxy acid dehydrogenase family. It depends on FMN as a cofactor.

The protein resides in the cell inner membrane. The enzyme catalyses (S)-lactate + A = pyruvate + AH2. Catalyzes the conversion of L-lactate to pyruvate. Is coupled to the respiratory chain. This Xanthomonas axonopodis pv. citri (strain 306) protein is L-lactate dehydrogenase.